We begin with the raw amino-acid sequence, 243 residues long: Probable phosphatase CLD_1129 (243 aa).

Residues His8, His10, His16, His41, Glu74, His102, His132, Asp192, and His194 each contribute to the Zn(2+) site.

Belongs to the PHP family. It depends on Zn(2+) as a cofactor.

This is Probable phosphatase CLD_1129 from Clostridium botulinum (strain Okra / Type B1).